A 356-amino-acid chain; its full sequence is Phosphoribosyl pyrophosphate synthase-associated protein 1 (356 aa).

Position 1 is an N-acetylmethionine (methionine 1). N-acetylproline is present on asparagine 2. Phosphoserine is present on residues serine 177 and serine 215.

Belongs to the ribose-phosphate pyrophosphokinase family. Binds to PRPS1 and PRPS2. Ubiquitous.

Its function is as follows. Seems to play a negative regulatory role in 5-phosphoribose 1-diphosphate synthesis. In Homo sapiens (Human), this protein is Phosphoribosyl pyrophosphate synthase-associated protein 1 (PRPSAP1).